A 501-amino-acid chain; its full sequence is ATP synthase subunit alpha (501 aa).

Position 169–176 (169–176 (GDRQTGKT)) interacts with ATP.

It belongs to the ATPase alpha/beta chains family. F-type ATPases have 2 components, CF(1) - the catalytic core - and CF(0) - the membrane proton channel. CF(1) has five subunits: alpha(3), beta(3), gamma(1), delta(1), epsilon(1). CF(0) has three main subunits: a(1), b(2) and c(9-12). The alpha and beta chains form an alternating ring which encloses part of the gamma chain. CF(1) is attached to CF(0) by a central stalk formed by the gamma and epsilon chains, while a peripheral stalk is formed by the delta and b chains.

Its subcellular location is the cell membrane. The catalysed reaction is ATP + H2O + 4 H(+)(in) = ADP + phosphate + 5 H(+)(out). Functionally, produces ATP from ADP in the presence of a proton gradient across the membrane. The alpha chain is a regulatory subunit. This Streptococcus thermophilus (strain CNRZ 1066) protein is ATP synthase subunit alpha.